The following is a 335-amino-acid chain: Mevalonate kinase (335 aa).

ATP is bound at residue 111 to 121 (PVGAGLGSSAA). D162 (proton acceptor) is an active-site residue.

The protein belongs to the GHMP kinase family. Mevalonate kinase subfamily. Homodimer. Mg(2+) serves as cofactor.

It localises to the cytoplasm. The catalysed reaction is (R)-mevalonate + ATP = (R)-5-phosphomevalonate + ADP + H(+). It functions in the pathway isoprenoid biosynthesis; isopentenyl diphosphate biosynthesis via mevalonate pathway; isopentenyl diphosphate from (R)-mevalonate: step 1/3. Functionally, catalyzes the phosphorylation of (R)-mevalonate (MVA) to (R)-mevalonate 5-phosphate (MVAP). Functions in the mevalonate (MVA) pathway leading to isopentenyl diphosphate (IPP), a key precursor for the biosynthesis of isoprenoid compounds such as archaeal membrane lipids. This Pyrococcus abyssi (strain GE5 / Orsay) protein is Mevalonate kinase.